The following is a 35-amino-acid chain: Water stress-responsive protein 7 (35 aa).

The chain is Water stress-responsive protein 7 from Pinus pinaster (Maritime pine).